The sequence spans 312 residues: tRNA dimethylallyltransferase (312 aa).

15 to 22 (GPTAAGKS) contributes to the ATP binding site. 17 to 22 (TAAGKS) contributes to the substrate binding site. The tract at residues 40 to 43 (DSMQ) is interaction with substrate tRNA.

The protein belongs to the IPP transferase family. As to quaternary structure, monomer. Requires Mg(2+) as cofactor.

The catalysed reaction is adenosine(37) in tRNA + dimethylallyl diphosphate = N(6)-dimethylallyladenosine(37) in tRNA + diphosphate. Catalyzes the transfer of a dimethylallyl group onto the adenine at position 37 in tRNAs that read codons beginning with uridine, leading to the formation of N6-(dimethylallyl)adenosine (i(6)A). The polypeptide is tRNA dimethylallyltransferase (Streptomyces coelicolor (strain ATCC BAA-471 / A3(2) / M145)).